The chain runs to 84 residues: Large ribosomal subunit protein bL27 (84 aa).

This sequence belongs to the bacterial ribosomal protein bL27 family.

In Karelsulcia muelleri (strain GWSS) (Sulcia muelleri), this protein is Large ribosomal subunit protein bL27.